The primary structure comprises 352 residues: [Citrate [pro-3S]-lyase] ligase (352 aa).

The 128-residue stretch at 1–128 (MFGNDIFTRV…VMVLMENSAT (128 aa)) folds into the N-acetyltransferase domain.

The catalysed reaction is holo-[citrate lyase ACP] + acetate + ATP = acetyl-[citrate lyase ACP] + AMP + diphosphate. Its function is as follows. Acetylation of prosthetic group (2-(5''-phosphoribosyl)-3'-dephosphocoenzyme-A) of the gamma subunit of citrate lyase. The protein is [Citrate [pro-3S]-lyase] ligase (citC) of Escherichia coli (strain K12).